We begin with the raw amino-acid sequence, 230 residues long: NAD(P)H-hydrate epimerase (230 aa).

The region spanning 11–218 is the YjeF N-terminal domain; it reads AIAVDQELFN…ALQRKYELNL (208 aa). 61 to 65 is a (6S)-NADPHX binding site; it reads NNGGD. K(+)-binding residues include asparagine 62 and aspartate 126. (6S)-NADPHX is bound by residues 130 to 136 and aspartate 159; that span reads GFSFKPP. Serine 162 contacts K(+).

The protein belongs to the NnrE/AIBP family. The cofactor is K(+).

The catalysed reaction is (6R)-NADHX = (6S)-NADHX. It catalyses the reaction (6R)-NADPHX = (6S)-NADPHX. Functionally, catalyzes the epimerization of the S- and R-forms of NAD(P)HX, a damaged form of NAD(P)H that is a result of enzymatic or heat-dependent hydration. This is a prerequisite for the S-specific NAD(P)H-hydrate dehydratase to allow the repair of both epimers of NAD(P)HX. This Drosophila melanogaster (Fruit fly) protein is NAD(P)H-hydrate epimerase.